A 147-amino-acid polypeptide reads, in one-letter code: Hemoglobin subunit beta (147 aa).

At Val-2 the chain carries N-acetylvaline. The Globin domain occupies 3-147 (HLSAEEKGLV…VATALAHKYH (145 aa)). Phosphothreonine is present on Thr-13. Ser-45 bears the Phosphoserine mark. Lys-60 carries the N6-acetyllysine modification. His-64 is a heme b binding site. Lys-83 is subject to N6-acetyllysine. His-93 provides a ligand contact to heme b. Cys-94 is subject to S-nitrosocysteine. Lys-145 bears the N6-acetyllysine mark.

The protein belongs to the globin family. Heterotetramer of two alpha chains and two beta chains. Red blood cells.

In terms of biological role, involved in oxygen transport from the lung to the various peripheral tissues. The protein is Hemoglobin subunit beta (HBB) of Scapanus orarius (Coast mole).